A 259-amino-acid chain; its full sequence is Dolichol-phosphate mannosyltransferase subunit 1 (259 aa).

Ala2 is modified (N-acetylalanine). Position 3 is a phosphoserine (Ser3). 11 residues coordinate GDP-alpha-D-mannose: Pro31, Tyr33, Glu35, Ile62, Asp64, Asp117, Ala118, Asp119, Arg146, Arg233, and Lys239. Asp119 is a binding site for Mg(2+). Asp119 contributes to the Mn(2+) binding site.

Belongs to the glycosyltransferase 2 family. As to quaternary structure, component of the dolichol-phosphate mannose (DPM) synthase complex composed of DPM1, DPM2 and DPM3; within the complex, directly interacts with DPM3. This interaction may stabilize DPM1. Mg(2+) is required as a cofactor. It depends on Mn(2+) as a cofactor. Requires Ca(2+) as cofactor.

Its subcellular location is the endoplasmic reticulum. It carries out the reaction a di-trans,poly-cis-dolichyl phosphate + GDP-alpha-D-mannose = a di-trans,poly-cis-dolichyl beta-D-mannosyl phosphate + GDP. The protein operates within protein modification; protein glycosylation. In terms of biological role, transfers mannose from GDP-mannose to dolichol monophosphate to form dolichol phosphate mannose (Dol-P-Man) which is the mannosyl donor in pathways leading to N-glycosylation, glycosyl phosphatidylinositol membrane anchoring, and O-mannosylation of proteins; catalytic subunit of the dolichol-phosphate mannose (DPM) synthase complex. The sequence is that of Dolichol-phosphate mannosyltransferase subunit 1 (DPM1) from Sus scrofa (Pig).